We begin with the raw amino-acid sequence, 291 residues long: Beta-lactamase CTX-M-6 (291 aa).

The first 28 residues, 1–28, serve as a signal peptide directing secretion; sequence MMTQSIRRSMLTVMATLPLLFSSATLHA. The Acyl-ester intermediate role is filled by Ser73. Substrate is bound at residue 237-239; that stretch reads KTG.

This sequence belongs to the class-A beta-lactamase family.

The enzyme catalyses a beta-lactam + H2O = a substituted beta-amino acid. Its function is as follows. Has cefotaxime-hydrolyzing activity. This is Beta-lactamase CTX-M-6 (bla) from Salmonella typhimurium.